The primary structure comprises 874 residues: Leucine--tRNA ligase (874 aa).

The short motif at 43-53 (PYPSGRIHIGH) is the 'HIGH' region element. The 'KMSKS' region motif lies at 630 to 634 (KMSKS). Position 633 (Lys633) interacts with ATP.

This sequence belongs to the class-I aminoacyl-tRNA synthetase family.

It is found in the cytoplasm. The enzyme catalyses tRNA(Leu) + L-leucine + ATP = L-leucyl-tRNA(Leu) + AMP + diphosphate. In Bradyrhizobium sp. (strain BTAi1 / ATCC BAA-1182), this protein is Leucine--tRNA ligase.